We begin with the raw amino-acid sequence, 135 residues long: UPF0355 protein SE_2351 (135 aa).

It belongs to the UPF0355 family.

The polypeptide is UPF0355 protein SE_2351 (Staphylococcus epidermidis (strain ATCC 12228 / FDA PCI 1200)).